The primary structure comprises 486 residues: 2-succinylbenzoate--CoA ligase (486 aa).

This sequence belongs to the ATP-dependent AMP-binding enzyme family. MenE subfamily.

It carries out the reaction 2-succinylbenzoate + ATP + CoA = 2-succinylbenzoyl-CoA + AMP + diphosphate. It functions in the pathway quinol/quinone metabolism; 1,4-dihydroxy-2-naphthoate biosynthesis; 1,4-dihydroxy-2-naphthoate from chorismate: step 5/7. It participates in quinol/quinone metabolism; menaquinone biosynthesis. In terms of biological role, converts 2-succinylbenzoate (OSB) to 2-succinylbenzoyl-CoA (OSB-CoA). In Bacillus subtilis (strain 168), this protein is 2-succinylbenzoate--CoA ligase.